A 640-amino-acid chain; its full sequence is Protection of telomeres protein 1 (640 aa).

The protein belongs to the telombin family. As to quaternary structure, homodimer or homooligomer. Component of the shelterin complex (telosome) composed of TERF1, TERF2, TINF2, TERF2IP, ACD and POT1. Binds single-stranded telomeric DNA as a monomer. Associated component of the telomerase holoenzyme complex. Found in a complex with TERF1, TINF2 and TNKS1. Interacts with TNKS1. Forms heterodimers with ACD. Identified in a complex with ACD and single-stranded telomeric DNA.

The protein resides in the nucleus. The protein localises to the chromosome. It is found in the telomere. Functionally, component of the telomerase ribonucleoprotein (RNP) complex that is essential for the replication of chromosome termini. Is a component of the double-stranded telomeric DNA-binding TRF1 complex which is involved in the regulation of telomere length by cis-inhibition of telomerase. Also acts as a single-stranded telomeric DNA-binding protein and thus may act as a downstream effector of the TRF1 complex and may transduce information about telomere maintenance and/or length to the telomere terminus. Component of the shelterin complex (telosome) that is involved in the regulation of telomere length and protection. Shelterin associates with arrays of double-stranded TTAGGG repeats added by telomerase and protects chromosome ends; without its protective activity, telomeres are no longer hidden from the DNA damage surveillance and chromosome ends are inappropriately processed by DNA repair pathways. Binds to two or more telomeric single-stranded 5'-TTAGGG-3' repeats (G-strand) and with high specificity to a minimal telomeric single-stranded 5'-TAGGGTTAG-3' sequence. Binds telomeric single-stranded sequences internally or at proximity of a 3'-end. Its activity is TERT dependent but it does not increase TERT activity. This Mus musculus (Mouse) protein is Protection of telomeres protein 1 (Pot1).